The following is a 273-amino-acid chain: Ribosomal RNA small subunit methyltransferase A (273 aa).

5 residues coordinate S-adenosyl-L-methionine: asparagine 17, leucine 19, glycine 44, glutamate 65, and asparagine 111.

The protein belongs to the class I-like SAM-binding methyltransferase superfamily. rRNA adenine N(6)-methyltransferase family. RsmA subfamily.

Its subcellular location is the cytoplasm. It catalyses the reaction adenosine(1518)/adenosine(1519) in 16S rRNA + 4 S-adenosyl-L-methionine = N(6)-dimethyladenosine(1518)/N(6)-dimethyladenosine(1519) in 16S rRNA + 4 S-adenosyl-L-homocysteine + 4 H(+). In terms of biological role, specifically dimethylates two adjacent adenosines (A1518 and A1519) in the loop of a conserved hairpin near the 3'-end of 16S rRNA in the 30S particle. May play a critical role in biogenesis of 30S subunits. This chain is Ribosomal RNA small subunit methyltransferase A, found in Buchnera aphidicola subsp. Acyrthosiphon pisum (strain APS) (Acyrthosiphon pisum symbiotic bacterium).